A 178-amino-acid chain; its full sequence is uncharacterized protein (178 aa).

The disordered stretch occupies residues Met1–Leu89. Composition is skewed to basic and acidic residues over residues Pro44–Val53 and Ala61–Leu89.

This is an uncharacterized protein from Schizosaccharomyces pombe (strain 972 / ATCC 24843) (Fission yeast).